Consider the following 215-residue polypeptide: Flavin-dependent thymidylate synthase (215 aa).

The ThyX domain occupies 1 to 215 (MDVRFISLTK…FPTVAAALEW (215 aa)). Residues Ser-56, 79-81 (RHR), and Glu-87 each bind FAD. DUMP-binding positions include 76 to 79 (QILR), 87 to 91 (EFSLR), and Arg-155. The short motif at 79-89 (RHRSFSFQEFS) is the ThyX motif element. His-177 is a binding site for FAD. Position 182 (Arg-182) interacts with dUMP. Arg-182 acts as the Involved in ionization of N3 of dUMP, leading to its activation in catalysis.

This sequence belongs to the thymidylate synthase ThyX family. Homotetramer. Requires FAD as cofactor.

It catalyses the reaction dUMP + (6R)-5,10-methylene-5,6,7,8-tetrahydrofolate + NADPH + H(+) = dTMP + (6S)-5,6,7,8-tetrahydrofolate + NADP(+). The protein operates within pyrimidine metabolism; dTTP biosynthesis. Its function is as follows. Catalyzes the reductive methylation of 2'-deoxyuridine-5'-monophosphate (dUMP) to 2'-deoxythymidine-5'-monophosphate (dTMP) while utilizing 5,10-methylenetetrahydrofolate (mTHF) as the methyl donor, and NADPH and FADH(2) as the reductant. The chain is Flavin-dependent thymidylate synthase from Synechocystis sp. (strain ATCC 27184 / PCC 6803 / Kazusa).